Consider the following 244-residue polypeptide: 3-deoxy-manno-octulosonate cytidylyltransferase (244 aa).

The protein belongs to the KdsB family.

The protein localises to the cytoplasm. The enzyme catalyses 3-deoxy-alpha-D-manno-oct-2-ulosonate + CTP = CMP-3-deoxy-beta-D-manno-octulosonate + diphosphate. Its pathway is nucleotide-sugar biosynthesis; CMP-3-deoxy-D-manno-octulosonate biosynthesis; CMP-3-deoxy-D-manno-octulosonate from 3-deoxy-D-manno-octulosonate and CTP: step 1/1. It participates in bacterial outer membrane biogenesis; lipopolysaccharide biosynthesis. Its function is as follows. Activates KDO (a required 8-carbon sugar) for incorporation into bacterial lipopolysaccharide in Gram-negative bacteria. The protein is 3-deoxy-manno-octulosonate cytidylyltransferase of Ruthia magnifica subsp. Calyptogena magnifica.